The primary structure comprises 198 residues: Recombination protein RecR (198 aa).

Residues 58-73 (CSVCGNFTDKDPCAIC) form a C4-type zinc finger. One can recognise a Toprim domain in the interval 81 to 175 (SIICVIEQPK…KVTRIAHGVP (95 aa)).

Belongs to the RecR family.

Functionally, may play a role in DNA repair. It seems to be involved in an RecBC-independent recombinational process of DNA repair. It may act with RecF and RecO. This Clostridium botulinum (strain ATCC 19397 / Type A) protein is Recombination protein RecR.